Consider the following 78-residue polypeptide: Acyl carrier protein (78 aa).

A Carrier domain is found at Ser-2 to Ala-77. Ser-37 carries the O-(pantetheine 4'-phosphoryl)serine modification.

This sequence belongs to the acyl carrier protein (ACP) family. Post-translationally, 4'-phosphopantetheine is transferred from CoA to a specific serine of apo-ACP by AcpS. This modification is essential for activity because fatty acids are bound in thioester linkage to the sulfhydryl of the prosthetic group.

It localises to the cytoplasm. It participates in lipid metabolism; fatty acid biosynthesis. Carrier of the growing fatty acid chain in fatty acid biosynthesis. The sequence is that of Acyl carrier protein from Azorhizobium caulinodans (strain ATCC 43989 / DSM 5975 / JCM 20966 / LMG 6465 / NBRC 14845 / NCIMB 13405 / ORS 571).